The sequence spans 278 residues: Non-haem bromoperoxidase BPO-A2 (278 aa).

The AB hydrolase-1 domain maps to 26–264 (PVVLIHGFPL…GAPHGLLWTH (239 aa)). Active-site residues include Ser-99, Asp-229, and His-258.

Belongs to the AB hydrolase superfamily. Bacterial non-heme haloperoxidase / perhydrolase family. Homotrimer.

Its function is as follows. May be a chlorinating enzyme involved in 7-chlorotetracycline biosynthesis. This is Non-haem bromoperoxidase BPO-A2 (bpoA2) from Kitasatospora aureofaciens (Streptomyces aureofaciens).